The sequence spans 439 residues: ATP-dependent RNA helicase RhlB (439 aa).

Positions 9–37 match the Q motif motif; it reads QKFADLPLHPEVKQALAENGFEFCTPIQA. The Helicase ATP-binding domain maps to 40–219; sequence LPVLLQSKDI…YDHMNDPVKV (180 aa). 53 to 60 is an ATP binding site; it reads AQTGTGKT. The DEAD box motif lies at 165-168; sequence DEAD. Residues 243 to 390 enclose the Helicase C-terminal domain; the sequence is KMRLLLTLIE…VSNYDRDALL (148 aa). The segment at 395 to 439 is disordered; that stretch reads SPVKIHRKHPAGARNLRERSGAGRTPGAHRSGGRPPRHDRTRRQP. A compositionally biased stretch (basic residues) spans 425–439; that stretch reads SGGRPPRHDRTRRQP.

The protein belongs to the DEAD box helicase family. RhlB subfamily. As to quaternary structure, component of the RNA degradosome, which is a multiprotein complex involved in RNA processing and mRNA degradation.

The protein localises to the cytoplasm. The enzyme catalyses ATP + H2O = ADP + phosphate + H(+). In terms of biological role, DEAD-box RNA helicase involved in RNA degradation. Has RNA-dependent ATPase activity and unwinds double-stranded RNA. This chain is ATP-dependent RNA helicase RhlB, found in Shewanella oneidensis (strain ATCC 700550 / JCM 31522 / CIP 106686 / LMG 19005 / NCIMB 14063 / MR-1).